The chain runs to 179 residues: ADP-ribosylation factor-like protein 5A (179 aa).

Gly2 carries the N-myristoyl glycine lipid modification. Residues 23-30 (GLDNAGKT), 66-70 (DIGGQ), 125-128 (NKQD), and Ala159 each bind GTP.

Belongs to the small GTPase superfamily. Arf family.

Its function is as follows. Lacks ADP-ribosylation enhancing activity. This Bos taurus (Bovine) protein is ADP-ribosylation factor-like protein 5A (ARL5A).